A 311-amino-acid chain; its full sequence is Malate dehydrogenase (311 aa).

NAD(+)-binding positions include 7–13 and D34; that span reads GAAGGIG. Residues R81 and R87 each contribute to the substrate site. NAD(+)-binding positions include N94 and 117–119; that span reads ITN. Residues N119 and R153 each contribute to the substrate site. The active-site Proton acceptor is the H177. Position 227 (M227) interacts with NAD(+).

This sequence belongs to the LDH/MDH superfamily. MDH type 1 family. As to quaternary structure, homodimer.

It catalyses the reaction (S)-malate + NAD(+) = oxaloacetate + NADH + H(+). Functionally, catalyzes the reversible oxidation of malate to oxaloacetate. In Shewanella woodyi (strain ATCC 51908 / MS32), this protein is Malate dehydrogenase.